Reading from the N-terminus, the 1470-residue chain is Isonitrile lipopeptide synthase (1470 aa).

The segment at 584 to 603 (PEPESQEAARPTAPAPTAPA) is disordered. One can recognise a Carrier domain in the interval 974 to 1049 (AHDSTLERTI…ELARFLKQQE (76 aa)). Residue serine 1009 is modified to O-(pantetheine 4'-phosphoryl)serine. Over residues 1049-1059 (EQQAHAQVQPR) the composition is skewed to low complexity. Residues 1049 to 1070 (EQQAHAQVQPRPAGPGLPPTLL) form a disordered region.

Belongs to the ATP-dependent AMP-binding enzyme family. It depends on pantetheine 4'-phosphate as a cofactor.

The catalysed reaction is 2 a (3R)-3-isocyanyl-fatty acyl-[ACP] + L-lysine + ATP + 2 NADPH = an isonitrile lipopeptide + 2 holo-[ACP] + AMP + diphosphate + 2 NADP(+). The enzyme catalyses 2 (3R)-3-isocyanylbutanoyl-[ACP] + L-lysine + ATP + 2 NADPH = (2S)-2,6-bis[(3R)-3-isocyanobutanamido]hexan-1-ol + 2 holo-[ACP] + AMP + diphosphate + 2 NADP(+). In terms of biological role, nonribosomal peptide synthetase (NRPS) involved in the biosynthesis of a unique class of isonitrile lipopeptides (INLPs). Catalyzes the final step in the pathway, i.e. the condensation of a (3R)-3-isocyanyl-fatty acyl-[ACP] to both amino groups of a lysine, producing isonitrile lipopeptides. Can use (3R)-3-isocyanylbutanoyl-[ACP] as substrate, leading to (2S)-2,6-bis[(3R)-3-isocyanobutanamido]hexan-1-ol. The chain is Isonitrile lipopeptide synthase from Streptomyces coeruleorubidus.